A 445-amino-acid polypeptide reads, in one-letter code: MSNRKYFGTDGIRGRVGDAPITPDFVLKLGWAAGKVLARHGSRKIIIGKDTRISGYMLESALEAGLAAAGLSASFTGPMPTPAVAYLTRTFRAEAGIVISASHNPFYDNGIKFFSIDGTKLPDEVEEAIEAEMEKEITCVDSSELGKASRIVDAAGRYIEFCKGTFPNELSLNELKIVVDCANGATYHIAPNVLRELGANVIAIGCEPNGVNINEEVGATDVRALQARVIAEKADLGIALDGDGDRVIMVDHEGNKVDGDQIMYIIAREGLRQGQLRGGAVGTLMSNMGLELALKQLGIPFARAKVGDRYVLEKLQEKGWRIGAENSGHVILLDKTTTGDGIVAGLQVLAAMVRNHMSLHDLCSGMKMFPQILVNVRYAAGSGDPLENDNVKAVTAEVEAALGNRGRVLLRKSGTEPLIRVMVEGEDEAQVTEFAHRIADAVKAV.

The active-site Phosphoserine intermediate is the Ser-102. Mg(2+)-binding residues include Ser-102, Asp-241, Asp-243, and Asp-245. Ser-102 is subject to Phosphoserine.

Belongs to the phosphohexose mutase family. Requires Mg(2+) as cofactor. Post-translationally, activated by phosphorylation.

The enzyme catalyses alpha-D-glucosamine 1-phosphate = D-glucosamine 6-phosphate. Its function is as follows. Catalyzes the conversion of glucosamine-6-phosphate to glucosamine-1-phosphate. The chain is Phosphoglucosamine mutase from Citrobacter koseri (strain ATCC BAA-895 / CDC 4225-83 / SGSC4696).